Consider the following 596-residue polypeptide: Succinate dehydrogenase flavoprotein subunit (596 aa).

FAD is bound by residues 18-23, 41-56, and Asp-225; these read GAGGAG and TKLF…AQGG. His-49 is subject to Tele-8alpha-FAD histidine. Residues His-246 and Thr-258 each coordinate substrate. The active-site Proton acceptor is the Arg-290. Residue His-357 coordinates substrate. Glu-391 serves as a coordination point for FAD. Arg-402 is a substrate binding site. 407–408 contributes to the FAD binding site; it reads SL.

This sequence belongs to the FAD-dependent oxidoreductase 2 family. FRD/SDH subfamily. As to quaternary structure, part of an enzyme complex containing four subunits: a flavoprotein, an iron-sulfur, cytochrome b-556, and a hydrophobic anchor protein. It depends on FAD as a cofactor.

It localises to the cell inner membrane. The catalysed reaction is a quinone + succinate = fumarate + a quinol. It functions in the pathway carbohydrate metabolism; tricarboxylic acid cycle; fumarate from succinate (bacterial route): step 1/1. The polypeptide is Succinate dehydrogenase flavoprotein subunit (sdhA) (Rickettsia felis (strain ATCC VR-1525 / URRWXCal2) (Rickettsia azadi)).